The chain runs to 194 residues: Putative manganese efflux pump MntP (194 aa).

6 helical membrane passes run P3–G23, L37–L57, D69–L89, L110–F132, C147–G167, and M172–G192.

Belongs to the MntP (TC 9.B.29) family.

Its subcellular location is the cell inner membrane. Probably functions as a manganese efflux pump. This is Putative manganese efflux pump MntP from Xanthomonas axonopodis pv. citri (strain 306).